The primary structure comprises 488 residues: Zinc finger protein 92 (488 aa).

In terms of domain architecture, KRAB spans Val14–Ser85. C2H2-type zinc fingers lie at residues Tyr141 to His163, Tyr169 to His191, Tyr197 to His219, Phe225 to His247, Phe253 to His275, and Tyr281 to His303. The segment at Phe309–His331 adopts a C2H2-type 7; degenerate zinc-finger fold. The C2H2-type 8 zinc-finger motif lies at Tyr337 to His359. The segment at Gln387–Lys408 is disordered. The C2H2-type 9 zinc-finger motif lies at Gln410 to His432. The tract at residues Glu435–Pro488 is disordered.

It belongs to the krueppel C2H2-type zinc-finger protein family. As to expression, highly expressed in pancreatic islets.

It localises to the nucleus. Its function is as follows. KRAB domain-containing zinc-finger protein that represses B1/Alu SINE transposable elements and modulates the transcription of nearby genes in a tissue-specific manner. It regulates glucose homeostasis and lipid metabolism by modulating the expression of the endocrine cell-defining transcription factor, MAFB, in pancreatic islets and, the fat metabolism regulator, ACACB, in adipose tissue and muscle. The chain is Zinc finger protein 92 (Zfp92) from Mus musculus (Mouse).